Reading from the N-terminus, the 990-residue chain is Envelope glycoprotein gp160 (990 aa).

Positions 1–107 (MASSKNMPSR…CLIWEMGKKH (107 aa)) are cleaved as a signal peptide. Topologically, residues 108–838 (SCNAEEVIAL…WSGWFSWLKY (731 aa)) are extracellular. N-linked (GlcNAc...) asparagine; by host glycans are attached at residues asparagine 141, asparagine 162, asparagine 207, asparagine 259, asparagine 299, asparagine 363, asparagine 386, asparagine 402, asparagine 413, asparagine 434, asparagine 438, asparagine 469, asparagine 474, asparagine 480, asparagine 490, asparagine 500, asparagine 514, asparagine 526, asparagine 536, asparagine 542, asparagine 550, asparagine 560, and asparagine 567. Positions 663–683 (GIGLVIVLAIMAIIAAAGAGL) are fusion peptide. Residues 695–745 (RTAVQSLANATAAQQNVLEATYAMVQHVAKGVRILEARVARVEAIVDRMML) adopt a coiled-coil conformation. N-linked (GlcNAc...) asparagine; by host glycosylation is present at asparagine 703. The immunosuppression stretch occupies residues 729 to 745 (LEARVARVEAIVDRMML). 3 N-linked (GlcNAc...) asparagine; by host glycosylation sites follow: asparagine 771, asparagine 778, and asparagine 794. Positions 786–821 (EEIEQHEANLSLLLKEAALQVQIAQRDAQRIPDVWK) form a coiled coil. Residues 839-859 (IPWIVVCIVGVICFRLLMCVI) form a helical membrane-spanning segment. Residues 860-990 (TMCLQAYRQV…AIENEYVELS (131 aa)) lie on the Cytoplasmic side of the membrane. Cysteine 862 carries S-palmitoyl cysteine; by host lipidation. The segment at 890 to 909 (KQREERDGSSGSENLEHEKR) is disordered.

As to quaternary structure, the mature envelope protein (Env) consists of a trimer of SU-TM heterodimers attached by noncovalent interactions or by a labile interchain disulfide bond. In terms of processing, specific enzymatic cleavages in vivo yield mature proteins. Envelope glycoproteins are synthesized as an inactive precursor that is N-glycosylated and processed likely by host cell furin or by a furin-like protease in the Golgi to yield the mature SU and TM proteins. The cleavage site between SU and TM requires the minimal sequence [KR]-X-[KR]-R. The transmembrane protein is palmitoylated.

The protein resides in the virion membrane. The protein localises to the host cell membrane. Functionally, the surface protein (SU) attaches the virus to the host cell by binding to its receptor. This interaction triggers the refolding of the transmembrane protein (TM) and is thought to activate its fusogenic potential by unmasking its fusion peptide. Fusion occurs at the host cell plasma membrane. In terms of biological role, the transmembrane protein (TM) acts as a class I viral fusion protein. Under the current model, the protein has at least 3 conformational states: pre-fusion native state, pre-hairpin intermediate state, and post-fusion hairpin state. During viral and target cell membrane fusion, the coiled coil regions (heptad repeats) assume a trimer-of-hairpins structure, positioning the fusion peptide in close proximity to the C-terminal region of the ectodomain. The formation of this structure appears to drive apposition and subsequent fusion of viral and target cell membranes. Membranes fusion leads to delivery of the nucleocapsid into the cytoplasm. The sequence is that of Envelope glycoprotein gp160 (env) from Ovine maedi visna related virus (strain South Africa) (SA-OMVV).